The sequence spans 187 residues: POM121 and ZP3 fusion protein (187 aa).

A disordered region spans residues 166–187; sequence GTPSHSRRQPRVVSQWSTSASL. Over residues 177–187 the composition is skewed to polar residues; it reads VVSQWSTSASL.

In terms of tissue distribution, expressed in spleen, thymus, pancreas, testis, ovary, small intestine, colon and lymphocytes.

This chain is POM121 and ZP3 fusion protein (POMZP3), found in Homo sapiens (Human).